A 344-amino-acid polypeptide reads, in one-letter code: Small ribosomal subunit protein mS38 (344 aa).

3 disordered regions span residues 1 to 27 (MIPQ…ASSA), 43 to 101 (ALQK…SVPS), and 325 to 344 (KKYK…QDRL). The span at 51–74 (SSKPSSPDDGSSRAFAARASVPAA) shows a compositional bias: low complexity. Positions 325–338 (KKYKKLMRRTRNER) are enriched in basic residues.

This sequence belongs to the mitochondrion-specific ribosomal protein mS38 family. Component of the mitochondrial small ribosomal subunit (mt-SSU). Mature N.crassa 74S mitochondrial ribosomes consist of a small (37S) and a large (54S) subunit. The 37S small subunit contains a 16S ribosomal RNA (16S mt-rRNA) and 32 different proteins. The 54S large subunit contains a 23S rRNA (23S mt-rRNA) and 42 different proteins.

It is found in the mitochondrion. Its function is as follows. Component of the mitochondrial ribosome (mitoribosome), a dedicated translation machinery responsible for the synthesis of mitochondrial genome-encoded proteins, including at least some of the essential transmembrane subunits of the mitochondrial respiratory chain. The mitoribosomes are attached to the mitochondrial inner membrane and translation products are cotranslationally integrated into the membrane. The chain is Small ribosomal subunit protein mS38 (cox24) from Neurospora crassa (strain ATCC 24698 / 74-OR23-1A / CBS 708.71 / DSM 1257 / FGSC 987).